The primary structure comprises 553 residues: Putative transport protein KPK_0013 (553 aa).

The next 5 membrane-spanning stretches (helical) occupy residues 4 to 24 (IALT…IGNV), 28 to 48 (GVGF…HFVD), 65 to 85 (FGLI…FFAS), 95 to 115 (LFAI…HKLF), and 158 to 178 (MSYA…MWLV). 2 consecutive RCK C-terminal domains span residues 192-276 (RFEE…VIGQ) and 279-361 (ATSL…ELGN). 6 consecutive transmembrane segments (helical) span residues 371–391 (MLPV…PLFI), 403–425 (AGGP…LYWF), 437–457 (LGIV…FVAT), 464–484 (LSWI…VGIL), 493–513 (YLTL…LAFA), and 532–552 (PLVM…FWGL).

The protein belongs to the AAE transporter (TC 2.A.81) family. YidE subfamily.

The protein resides in the cell membrane. The chain is Putative transport protein KPK_0013 from Klebsiella pneumoniae (strain 342).